Consider the following 383-residue polypeptide: Probable endoplasmic reticulum-Golgi intermediate compartment protein 3 (383 aa).

Residues 1–26 (MLISQLKKFDAYPKTVDDFRVKTYTG) are Cytoplasmic-facing. Residues 27–47 (AIVSIIGGVFILWLFFSQVTL) traverse the membrane as a helical segment. Residues 48-347 (YFSTDIHHEL…GKSFASFLTN (300 aa)) lie on the Lumenal side of the membrane. Residues 348-368 (VCAIIGGVFTVFGIFDSFIYY) traverse the membrane as a helical segment. Over 369–383 (STKNLQKKIDLGKTF) the chain is Cytoplasmic.

It belongs to the ERGIC family.

Its subcellular location is the endoplasmic reticulum-Golgi intermediate compartment membrane. It is found in the golgi apparatus. The protein resides in the cis-Golgi network membrane. The protein localises to the endoplasmic reticulum membrane. Its function is as follows. Possible role in transport between endoplasmic reticulum and Golgi. The sequence is that of Probable endoplasmic reticulum-Golgi intermediate compartment protein 3 (ergic3) from Dictyostelium discoideum (Social amoeba).